A 209-amino-acid chain; its full sequence is Kynurenine formamidase (209 aa).

A substrate-binding site is contributed by W19. Zn(2+) is bound by residues H49, H53, and D55. H59 (proton donor/acceptor) is an active-site residue. The Zn(2+) site is built by H160 and E172.

This sequence belongs to the Cyclase 1 superfamily. KynB family. Homodimer. The cofactor is Zn(2+).

The enzyme catalyses N-formyl-L-kynurenine + H2O = L-kynurenine + formate + H(+). Its pathway is amino-acid degradation; L-tryptophan degradation via kynurenine pathway; L-kynurenine from L-tryptophan: step 2/2. Functionally, catalyzes the hydrolysis of N-formyl-L-kynurenine to L-kynurenine, the second step in the kynurenine pathway of tryptophan degradation. In Ralstonia pickettii (strain 12J), this protein is Kynurenine formamidase.